The primary structure comprises 211 residues: Protein crossbronx-like (211 aa).

Residues 17-177 (NQGYQILAEY…VRNSILWSCK (161 aa)) enclose the UBC core domain.

The protein belongs to the ubiquitin-conjugating enzyme family. FTS subfamily.

This Drosophila grimshawi (Hawaiian fruit fly) protein is Protein crossbronx-like.